A 167-amino-acid polypeptide reads, in one-letter code: Putative peroxiredoxin-B (167 aa).

One can recognise a Thioredoxin domain in the interval 4-167 (IKRGDRFPTT…STAQKIIAKL (164 aa)). C53 serves as the catalytic Cysteine sulfenic acid (-SOH) intermediate. Positions 165-167 (AKL) match the Microbody targeting signal motif.

Belongs to the peroxiredoxin family. Prx5 subfamily.

It is found in the peroxisome membrane. The enzyme catalyses a hydroperoxide + [thioredoxin]-dithiol = an alcohol + [thioredoxin]-disulfide + H2O. Its function is as follows. Thiol-specific peroxidase that catalyzes the reduction of hydrogen peroxide and organic hydroperoxides to water and alcohols, respectively. Plays a role in cell protection against oxidative stress by detoxifying peroxides and as sensor of hydrogen peroxide-mediated signaling events. In Candida boidinii (Yeast), this protein is Putative peroxiredoxin-B (PMPB).